A 257-amino-acid chain; its full sequence is 7-carboxy-7-deazaguanine synthase (257 aa).

A disordered region spans residues 1-25; it reads MKSVDHPVDVLPAEHSAETPGDARA. Substrate contacts are provided by residues 39-41 and Arg-54; that span reads RQG. Residues 45–244 form the Radical SAM core domain; that stretch reads LTGTESVFIR…AISRGYQYCD (200 aa). The [4Fe-4S] cluster site is built by Cys-58, Cys-62, and Cys-65. A Mg(2+)-binding site is contributed by Thr-67. Thr-99 contributes to the substrate binding site. S-adenosyl-L-methionine-binding positions include Gly-101 and 143–145; that span reads SPK.

Belongs to the radical SAM superfamily. 7-carboxy-7-deazaguanine synthase family. Homodimer. [4Fe-4S] cluster serves as cofactor. S-adenosyl-L-methionine is required as a cofactor. It depends on Mg(2+) as a cofactor.

The enzyme catalyses 6-carboxy-5,6,7,8-tetrahydropterin + H(+) = 7-carboxy-7-deazaguanine + NH4(+). Its pathway is purine metabolism; 7-cyano-7-deazaguanine biosynthesis. Catalyzes the complex heterocyclic radical-mediated conversion of 6-carboxy-5,6,7,8-tetrahydropterin (CPH4) to 7-carboxy-7-deazaguanine (CDG), a step common to the biosynthetic pathways of all 7-deazapurine-containing compounds. The chain is 7-carboxy-7-deazaguanine synthase from Rhodopirellula baltica (strain DSM 10527 / NCIMB 13988 / SH1).